A 280-amino-acid chain; its full sequence is Ribosomal protein L11 methyltransferase (280 aa).

Residues Thr131, Gly152, Asp174, and Asn217 each coordinate S-adenosyl-L-methionine.

This sequence belongs to the methyltransferase superfamily. PrmA family.

The protein resides in the cytoplasm. It carries out the reaction L-lysyl-[protein] + 3 S-adenosyl-L-methionine = N(6),N(6),N(6)-trimethyl-L-lysyl-[protein] + 3 S-adenosyl-L-homocysteine + 3 H(+). In terms of biological role, methylates ribosomal protein L11. The sequence is that of Ribosomal protein L11 methyltransferase from Bacteroides fragilis (strain ATCC 25285 / DSM 2151 / CCUG 4856 / JCM 11019 / LMG 10263 / NCTC 9343 / Onslow / VPI 2553 / EN-2).